A 470-amino-acid chain; its full sequence is Neuraminidase (470 aa).

The Intravirion segment spans residues 1-14 (MNPNQKIITIGSAS). The tract at residues 11–32 (GSASLGLVILNVILHVVSIIVT) is involved in apical transport and lipid raft association. A helical transmembrane segment spans residues 15 to 35 (LGLVILNVILHVVSIIVTVLV). A hypervariable stalk region region spans residues 32 to 86 (TVLVLSNNGTGPNCNGTIIREYNETVRVERITQWYNTNIIEYIEEPSNEYYMSNT). Topologically, residues 36–470 (LSNNGTGPNC…AILPFDIDKM (435 aa)) are virion surface. N-linked (GlcNAc...) asparagine; by host glycans are attached at residues Asn-39, Asn-46, and Asn-54. The tract at residues 89-470 (LCEAQGFAPF…AILPFDIDKM (382 aa)) is head of neuraminidase. 8 disulfide bridges follow: Cys-90–Cys-417, Cys-122–Cys-127, Cys-182–Cys-229, Cys-231–Cys-236, Cys-277–Cys-290, Cys-279–Cys-288, Cys-316–Cys-335, and Cys-421–Cys-446. Residue Arg-116 coordinates substrate. Asn-144 carries an N-linked (GlcNAc...) asparagine; by host glycan. Asp-149 acts as the Proton donor/acceptor in catalysis. Substrate is bound at residue Arg-150. 275-276 (EE) is a binding site for substrate. Arg-291 lines the substrate pocket. Asp-292 serves as a coordination point for Ca(2+). N-linked (GlcNAc...) asparagine; by host glycosylation occurs at Asn-293. 2 residues coordinate Ca(2+): Gly-296 and Asp-322. Position 368 (Arg-368) interacts with substrate. Asn-398 carries N-linked (GlcNAc...) asparagine; by host glycosylation. Tyr-402 (nucleophile) is an active-site residue.

Belongs to the glycosyl hydrolase 34 family. Homotetramer. It depends on Ca(2+) as a cofactor. N-glycosylated.

It localises to the virion membrane. The protein resides in the host apical cell membrane. The enzyme catalyses Hydrolysis of alpha-(2-&gt;3)-, alpha-(2-&gt;6)-, alpha-(2-&gt;8)- glycosidic linkages of terminal sialic acid residues in oligosaccharides, glycoproteins, glycolipids, colominic acid and synthetic substrates.. Inhibited by the neuraminidase inhibitors zanamivir (Relenza) and oseltamivir (Tamiflu). These drugs interfere with the release of progeny virus from infected cells and are effective against all influenza strains. Resistance to neuraminidase inhibitors is quite rare. Catalyzes the removal of terminal sialic acid residues from viral and cellular glycoconjugates. Cleaves off the terminal sialic acids on the glycosylated HA during virus budding to facilitate virus release. Additionally helps virus spread through the circulation by further removing sialic acids from the cell surface. These cleavages prevent self-aggregation and ensure the efficient spread of the progeny virus from cell to cell. Otherwise, infection would be limited to one round of replication. Described as a receptor-destroying enzyme because it cleaves a terminal sialic acid from the cellular receptors. May facilitate viral invasion of the upper airways by cleaving the sialic acid moieties on the mucin of the airway epithelial cells. Likely to plays a role in the budding process through its association with lipid rafts during intracellular transport. May additionally display a raft-association independent effect on budding. Plays a role in the determination of host range restriction on replication and virulence. Sialidase activity in late endosome/lysosome traffic seems to enhance virus replication. The sequence is that of Neuraminidase from Influenza A virus (strain A/Equine/Miami/1/1963 H3N8).